Here is a 251-residue protein sequence, read N- to C-terminus: tRNA (guanine-N(1)-)-methyltransferase (251 aa).

S-adenosyl-L-methionine is bound by residues glycine 113 and 133–138 (IGDYVL).

It belongs to the RNA methyltransferase TrmD family. Homodimer.

It is found in the cytoplasm. It catalyses the reaction guanosine(37) in tRNA + S-adenosyl-L-methionine = N(1)-methylguanosine(37) in tRNA + S-adenosyl-L-homocysteine + H(+). Functionally, specifically methylates guanosine-37 in various tRNAs. The sequence is that of tRNA (guanine-N(1)-)-methyltransferase from Pectobacterium carotovorum subsp. carotovorum (strain PC1).